Consider the following 532-residue polypeptide: Bifunctional purine biosynthesis protein PurH (532 aa).

The 147-residue stretch at 1-147 folds into the MGS-like domain; it reads MADRPIRQAL…KNHKDVAIVV (147 aa).

Belongs to the PurH family.

The enzyme catalyses (6R)-10-formyltetrahydrofolate + 5-amino-1-(5-phospho-beta-D-ribosyl)imidazole-4-carboxamide = 5-formamido-1-(5-phospho-D-ribosyl)imidazole-4-carboxamide + (6S)-5,6,7,8-tetrahydrofolate. It catalyses the reaction IMP + H2O = 5-formamido-1-(5-phospho-D-ribosyl)imidazole-4-carboxamide. The protein operates within purine metabolism; IMP biosynthesis via de novo pathway; 5-formamido-1-(5-phospho-D-ribosyl)imidazole-4-carboxamide from 5-amino-1-(5-phospho-D-ribosyl)imidazole-4-carboxamide (10-formyl THF route): step 1/1. It functions in the pathway purine metabolism; IMP biosynthesis via de novo pathway; IMP from 5-formamido-1-(5-phospho-D-ribosyl)imidazole-4-carboxamide: step 1/1. The sequence is that of Bifunctional purine biosynthesis protein PurH from Haemophilus influenzae (strain ATCC 51907 / DSM 11121 / KW20 / Rd).